Reading from the N-terminus, the 444-residue chain is MSTFTRVMEEKIMPVAGKIAGQRHLSALRDGIILTMPLIIIGSVFLILTSLPIPGYADFMASVFGNEWADKLGYPVNASFDIMAMIAAFGIAYRLAESYGVDALSAGAISIAAFLLATPFEVPFTPHGSTESIMVGGGIPITLLGSKGLFVAMLIALFSTEIYRYIIQKNIVFKMPDGVPPAVSKSFVALIPGFIIVLLVWLARLLIEMTPFQSLHNVVGDLLGTPLSILGGSLGGSLIAEFVQMLLWSCGIHGASIIGGIMAPIWYGAMDANRLAFQAGEALPSIFTTQFFQIWINVGGSGATLALVLTMLVRSRSKQMKQLGRLGIGPALFNINEPIIFGMPIVMNPLLIVPFIIAPLLTITATYIGMSTGLVARPAGIAVPWTMPPLISGYLATGGKVSGAVMQLVNLLITCAIYYPFFRIWDHQKWREESAVESGDKNVM.

One can recognise a PTS EIIC type-3 domain in the interval 8 to 421; the sequence is MEEKIMPVAG…LITCAIYYPF (414 aa). Helical transmembrane passes span 31-51, 72-92, 104-124, 138-158, 187-207, 223-243, 246-266, 291-311, 349-371, and 402-422; these read GIIL…LTSL, LGYP…FGIA, LSAG…EVPF, GIPI…IALF, FVAL…RLLI, LGTP…AEFV, LLWS…APIW, FFQI…VLTM, PLLI…IGMS, and SGAV…YPFF.

The protein localises to the cell membrane. Functionally, the phosphoenolpyruvate-dependent sugar phosphotransferase system (PTS), a major carbohydrate active -transport system, catalyzes the phosphorylation of incoming sugar substrates concomitant with their translocation across the cell membrane. This Bacillus subtilis (strain 168) protein is Putative permease IIC component YwbA (ywbA).